A 276-amino-acid chain; its full sequence is Octanoyltransferase LipM (276 aa).

Residues 32 to 247 (GALPPVIRFY…GFEKGLDIKL (216 aa)) enclose the BPL/LPL catalytic domain. The active-site Acyl-thioester intermediate is cysteine 149.

Belongs to the octanoyltransferase LipM family. Monomer.

The enzyme catalyses octanoyl-[ACP] + L-lysyl-[protein] = N(6)-octanoyl-L-lysyl-[protein] + holo-[ACP] + H(+). It participates in protein modification; protein lipoylation via endogenous pathway; protein N(6)-(lipoyl)lysine from octanoyl-[acyl-carrier-protein]. In terms of biological role, catalyzes the transfer of endogenously produced octanoic acid from octanoyl-acyl-carrier-protein onto the lipoyl domain of GcvH, an intermediate carrier during protein lipoylation. The sequence is that of Octanoyltransferase LipM from Macrococcus caseolyticus (strain JCSC5402) (Macrococcoides caseolyticum).